A 113-amino-acid chain; its full sequence is Ribonuclease P protein component (113 aa).

It belongs to the RnpA family. In terms of assembly, consists of a catalytic RNA component (M1 or rnpB) and a protein subunit.

The enzyme catalyses Endonucleolytic cleavage of RNA, removing 5'-extranucleotides from tRNA precursor.. In terms of biological role, RNaseP catalyzes the removal of the 5'-leader sequence from pre-tRNA to produce the mature 5'-terminus. It can also cleave other RNA substrates such as 4.5S RNA. The protein component plays an auxiliary but essential role in vivo by binding to the 5'-leader sequence and broadening the substrate specificity of the ribozyme. This is Ribonuclease P protein component from Clostridium novyi (strain NT).